The primary structure comprises 397 residues: MIPLEKPGSGGSPSAAASGSGPGGLLTEIRTAIRTEPFQDCYSLSPGRELGRGKFAVVRKCIQKDSGKEFAAKFMRKRRKGQDCRMEIIHEIAVLELAQDNPWVINLHEVYETSSEMILVLEYAAGGEISDQCVADRDEAFNEKDVQRLMRQILEGVHFLHTHDVVHLDLKPQNILLTSESPLGDIKIVDFGLSRIVKNSEELREIMGTPEYVAPEILSYDPISMATDMWSIGVLTYVMLTGISPFLGDNKQETFLNISQMNLSYSEEEFDTVSESAVDFIKKLLVKKPEDRATAEECLKHPWLTQSSIQDPVLRVKEALEEANALQKGDSVPEISSATEKPGTEESIVTEELIVVTSYTLGQCRQSEKEKMEQKAISKRFKFEEPLLQEIPGEFIY.

The tract at residues 1 to 23 (MIPLEKPGSGGSPSAAASGSGPG) is disordered. S9 is modified (phosphoserine). The Protein kinase domain occupies 44-304 (LSPGRELGRG…AEECLKHPWL (261 aa)). Residues 50–58 (LGRGKFAVV) and K73 each bind ATP. Catalysis depends on D169, which acts as the Proton acceptor.

The protein belongs to the protein kinase superfamily. CAMK Ser/Thr protein kinase family. DAP kinase subfamily. Autophosphorylated. Highly expressed in bone marrow. Lower levels in brain, heart, lung, liver and kidney.

It is found in the nucleus. The catalysed reaction is L-seryl-[protein] + ATP = O-phospho-L-seryl-[protein] + ADP + H(+). The enzyme catalyses L-threonyl-[protein] + ATP = O-phospho-L-threonyl-[protein] + ADP + H(+). With respect to regulation, inhibited by thiazolidinedione-type compounds: inhibited by furan- and pyridone- thiazolidinediones. In terms of biological role, acts as a positive regulator of apoptosis. May also act as a regulator of cellular reactive oxygen species. The polypeptide is Serine/threonine-protein kinase 17A (STK17A) (Oryctolagus cuniculus (Rabbit)).